The primary structure comprises 173 residues: Crossover junction endodeoxyribonuclease RuvC (173 aa).

Residues Asp8, Glu67, and Asp139 contribute to the active site. The Mg(2+) site is built by Asp8, Glu67, and Asp139.

It belongs to the RuvC family. As to quaternary structure, homodimer which binds Holliday junction (HJ) DNA. The HJ becomes 2-fold symmetrical on binding to RuvC with unstacked arms; it has a different conformation from HJ DNA in complex with RuvA. In the full resolvosome a probable DNA-RuvA(4)-RuvB(12)-RuvC(2) complex forms which resolves the HJ. The cofactor is Mg(2+).

The protein localises to the cytoplasm. The catalysed reaction is Endonucleolytic cleavage at a junction such as a reciprocal single-stranded crossover between two homologous DNA duplexes (Holliday junction).. Functionally, the RuvA-RuvB-RuvC complex processes Holliday junction (HJ) DNA during genetic recombination and DNA repair. Endonuclease that resolves HJ intermediates. Cleaves cruciform DNA by making single-stranded nicks across the HJ at symmetrical positions within the homologous arms, yielding a 5'-phosphate and a 3'-hydroxyl group; requires a central core of homology in the junction. The consensus cleavage sequence is 5'-(A/T)TT(C/G)-3'. Cleavage occurs on the 3'-side of the TT dinucleotide at the point of strand exchange. HJ branch migration catalyzed by RuvA-RuvB allows RuvC to scan DNA until it finds its consensus sequence, where it cleaves and resolves the cruciform DNA. In Proteus mirabilis (strain HI4320), this protein is Crossover junction endodeoxyribonuclease RuvC.